Consider the following 165-residue polypeptide: Endoribonuclease YbeY (165 aa).

Zn(2+) is bound by residues histidine 130, histidine 134, and histidine 140.

This sequence belongs to the endoribonuclease YbeY family. Zn(2+) serves as cofactor.

It is found in the cytoplasm. Single strand-specific metallo-endoribonuclease involved in late-stage 70S ribosome quality control and in maturation of the 3' terminus of the 16S rRNA. This chain is Endoribonuclease YbeY, found in Streptococcus gordonii (strain Challis / ATCC 35105 / BCRC 15272 / CH1 / DL1 / V288).